Consider the following 192-residue polypeptide: Density-regulated protein homolog (192 aa).

The interval 62–116 (GLEISDEPAADGDEKKKQKRGGKGSKTGAAAAQAAASGGKKKGGGPQKVTLQREP) is disordered. Residues 87-99 (KTGAAAAQAAASG) are compositionally biased toward low complexity. The 60-residue stretch at 117–176 (RGKKSVTVIKGLATFDIDLKVASKLFAQKFACGSSVTGADEIVIQGDVKDDLLDLIPEKW) folds into the SUI1 domain.

Belongs to the DENR family.

The polypeptide is Density-regulated protein homolog (Caenorhabditis elegans).